The chain runs to 211 residues: Protein-L-isoaspartate O-methyltransferase (211 aa).

Residue Ser-62 is part of the active site.

This sequence belongs to the methyltransferase superfamily. L-isoaspartyl/D-aspartyl protein methyltransferase family.

It is found in the cytoplasm. It catalyses the reaction [protein]-L-isoaspartate + S-adenosyl-L-methionine = [protein]-L-isoaspartate alpha-methyl ester + S-adenosyl-L-homocysteine. Its function is as follows. Catalyzes the methyl esterification of L-isoaspartyl residues in peptides and proteins that result from spontaneous decomposition of normal L-aspartyl and L-asparaginyl residues. It plays a role in the repair and/or degradation of damaged proteins. The polypeptide is Protein-L-isoaspartate O-methyltransferase (Shewanella baltica (strain OS223)).